The sequence spans 1804 residues: MFSALRSKNQSNKRSNDDSINSRKDVNELSLGAGGTSTSTNTNHNDSPSIKNKNKNKNKNKTENENIYKLTISSGRSRGTASNTTNANTLVLNAGVAIVGKAPIASSQNEIQTISGQSLQSGIDTNLMTAGFGRSAGIDSTTTVSHDANSVKSRLQRLPTITTSYKEINNGNKPVQVEPQDDSHYTSSLLVDTDPRSNNQPQSISSNAVANVEINRTLQLDLVYHESRVSEKLVMLDLKKLPHIKEGQLCELRTYRKRKSTSARSNKNSRDKKLYFIAHDFDEETRKRCHKFGNISVALGQLQLLLDLPPRSRVWIKPKRKEDTAADLIELHIKDILVNRGDMWCMSSELVDTCVFTGQRIMFLDSIRTTVNGIYKNGKKVLSGYINDNTKIVFRSESSRLLFIIQITNEMWSFDESGEQMFQKMINSFFPKIFNKWKDIETHHSITIAFAISMDMSTSSYKDLKPGQRIKNTTDYYRIVVDQVSVIYWVEIMESLRKEFMEITRELLSRKSDDKKDNELSVIKGRFAPVIKSNILELINFAATTIVDPFRQLDLRHTSTHVMIISPGKGLYDVDYDLLQLSCKKLLSLELTMDLICLSNPPLHVVPLFRYIDYENKLHHCIPPWLNIFFWNDKTKDTNKWTPRCQIYDLQMMGLTDTELVQELELDYLNPSDDINDLQTFLKDYDRDIFLPISTANFKAENISSDPDEEDLKELKKINDKTTTIHKSSTSRNTLTKSQRTNSEENNSIRSRKGDTIIKDPQFVGKISNSSRNNPPYDLSDKSTFEKQFKPKTTFHPSAMIKKTPENMKKLTNPVFQQQYFDIQTDNGLTGNSKNLLIKNTKYLTPIIDEPQTPLVTGNLYRTRFESQSNDNELNENSKLPERGGGTDERRNVSAADTLKDVTKKSSIKDFTQRIFTKFLATTKQSNFNSDGINSSAITEDAVLISDDTDGKTNNNNDFAVYPSSVADGDVSGDNQHRLNNKDSFTSILKPIPRPQLGVKIFKSDINNLSSNENVNSETKQNLLGTRNTINRKQFTASPHFTSSTKNSVSNHSRFIKFDSMDDWIEILEDSIPSYSFLGDDLLPTRWRDVWPKNVFRKYSKWKSFTSPAELPITLKRFPSKYELENNFMLRNHSVTQNWEQEQYKLTTKDLLRNMIYLRLLVGFQICTSSTIEEVESARKGDRDVFAIHKYLRGDLTGTFKIYMLMGSEIHRLHYDNSGTINVERYIEKSERNVFDQVPSYTSFVKTRYDSNYRKTDVDPIHTKRSEFNWNLLDQLLAGYSDPYLYDEWHGFRSKYVILPAEIPSNTFSMVVNGKNETLTTEEIRVEGLRKLIASITRLKLLSVEESKIQKDRKTEIQPEVIFYTGSLFDFLNEQQAQLDSSTLNFKDSIFGDVTKKLNKNIDLKNLAQELQMGENKLNLVTRKWHWKRHANCFVGSEMVNWLIRNFSDIDTRSTAISYGQKLMNDGLFIHVLDKHSFLDGNYFYQISPEFIINMNTVERTNSKNSNTSDNNTLKKTTSRNSTESNLTPLSMRNKVSTMDDDSTQLANTTSANSYKEKKTVVLSNSMLINVDPSSKSYKEELCTVHFDRVHNPEHCFHIRLEWLTTTPKLIDNMLGNWARICEKYGLKLIEIPWNELCTIPSVDPFHTFVQLHLVINPWEDPEFNDPELFAVSKFYYHIHLLKMSGFLLDNRASRFFQRDDADFEIMYSWGKPQFKYAQYIHTTGAYIAEMRENGNIFLAPNNVYMSRVNRANVISKTRSSPTFTVDSRKVVIEFSRTCYSYAKLRAVFLDAKEKWLSNKTVED.

Positions 1–13 are enriched in polar residues; the sequence is MFSALRSKNQSNK. Disordered stretches follow at residues 1-65, 169-204, 723-797, and 866-892; these read MFSA…TENE, NNGN…PQSI, TTIH…TFHP, and ESQS…ERRN. Over residues 14–27 the composition is skewed to basic and acidic residues; it reads RSNDDSINSRKDVN. Polar residues-rich tracts occupy residues 185 to 204 and 723 to 749; these read YTSS…PQSI and TTIH…NNSI. Positions 779-789 are enriched in basic and acidic residues; the sequence is LSDKSTFEKQF. The segment covering 866-878 has biased composition (polar residues); it reads ESQSNDNELNENS. Basic and acidic residues predominate over residues 879–892; it reads KLPERGGGTDERRN. Residues 1414–1489 form the DEP domain; it reads GENKLNLVTR…DGNYFYQISP (76 aa). A disordered region spans residues 1501–1528; the sequence is TNSKNSNTSDNNTLKKTTSRNSTESNLT. Residues 1503 to 1516 show a composition bias toward low complexity; the sequence is SKNSNTSDNNTLKK.

Belongs to the IML1 family.

The protein localises to the vacuole membrane. This chain is Vacuolar membrane-associated protein IML1 (IML1), found in Candida glabrata (strain ATCC 2001 / BCRC 20586 / JCM 3761 / NBRC 0622 / NRRL Y-65 / CBS 138) (Yeast).